Here is a 311-residue protein sequence, read N- to C-terminus: Halocin-S8 (311 aa).

Propeptides lie at residues 1–230 and 267–311; these read MSDK…IQLQ and TVAC…TSFW.

Its subcellular location is the secreted. In terms of biological role, has antibacterial activity against the haloarchaeons H.salinarium NRC817, Halobacterium GRB and H.gibbonsii. In Haloarchaeon S8a, this protein is Halocin-S8 (halS8).